The chain runs to 660 residues: Galactocerebrosidase (660 aa).

A signal peptide spans 1–18 (MQTHNFLCIISVILGCSA). Thr87 and Trp129 together coordinate substrate. Asn147 carries N-linked (GlcNAc...) asparagine glycosylation. Asn175 provides a ligand contact to substrate. Catalysis depends on Glu176, which acts as the Proton donor/acceptor. The active-site Nucleophile is the Glu251. Cys264 and Cys371 form a disulfide bridge. N-linked (GlcNAc...) asparagine glycans are attached at residues Asn293 and Asn356. Arg373 serves as a coordination point for substrate. Residues Asn413, Asn465, Asn495, Asn499, Asn537, and Asn578 are each glycosylated (N-linked (GlcNAc...) asparagine).

Belongs to the glycosyl hydrolase 59 family.

The protein localises to the lysosome. It carries out the reaction a beta-D-galactosyl-(1&lt;-&gt;1')-N-acylsphing-4-enine + H2O = an N-acylsphing-4-enine + D-galactose. The catalysed reaction is beta-D-galactosyl-(1&lt;-&gt;1)-sphing-4-enine + H2O = sphing-4-enine + D-galactose. The enzyme catalyses a D-galactosylceramide + H2O = an N-acyl-sphingoid base + D-galactose. Hydrolyzes the galactose ester bonds of glycolipids such as galactosylceramide and galactosylsphingosine. This chain is Galactocerebrosidase, found in Danio rerio (Zebrafish).